Reading from the N-terminus, the 201-residue chain is Large ribosomal subunit protein uL4 (201 aa).

The segment at K44–R68 is disordered.

The protein belongs to the universal ribosomal protein uL4 family. In terms of assembly, part of the 50S ribosomal subunit.

In terms of biological role, one of the primary rRNA binding proteins, this protein initially binds near the 5'-end of the 23S rRNA. It is important during the early stages of 50S assembly. It makes multiple contacts with different domains of the 23S rRNA in the assembled 50S subunit and ribosome. Forms part of the polypeptide exit tunnel. The protein is Large ribosomal subunit protein uL4 of Xanthomonas axonopodis pv. citri (strain 306).